A 182-amino-acid chain; its full sequence is Gremlin-1 (182 aa).

The signal sequence occupies residues 1-24 (MNCLVYALGSLFLLSGLLLPSSEG). The segment at 23 to 65 (EGKKKVSGSQGAIPPPDKGQPNDSEQGQAQPGDRVRGKGKGQA) is disordered. An N-linked (GlcNAc...) asparagine glycan is attached at Asn44. 4 disulfide bridges follow: Cys92–Cys142, Cys106–Cys156, Cys116–Cys174, and Cys120–Cys176. Positions 92-182 (CKTQPLKQTI…QCRCISIDLD (91 aa)) constitute a CTCK domain.

Belongs to the DAN family.

Its subcellular location is the secreted. Cytokine that has an axial patterning activity. Acts like BMP antagonist in embryonic explants. Blocks the BMP2 activity. The protein is Gremlin-1 (grem1) of Xenopus laevis (African clawed frog).